Consider the following 121-residue polypeptide: C-type natriuretic peptide 4 (121 aa).

A signal peptide spans 1–22; it reads MNLSYLVACGLLVTFLSDKMDA. Residues 23–96 constitute a propeptide that is removed on maturation; sequence QPLTPAQQKS…SRRHKSGSKK (74 aa). Residues 80–109 form a disordered region; that stretch reads LLNDQPASRRHKSGSKKGGSTSRSGCFGHK. Cysteines 105 and 121 form a disulfide.

It belongs to the natriuretic peptide family. As to expression, brain, spinal cord, spleen, heart and fin, and to a lower extent in gill and ovary.

Its subcellular location is the secreted. Exhibits natriuretic and vasodepressant activity. Has cGMP-stimulating activity. May help to regulate body fluid homeostasis in a variety of aquatic environments. The polypeptide is C-type natriuretic peptide 4 (Oryzias latipes (Japanese rice fish)).